A 149-amino-acid polypeptide reads, in one-letter code: 3-dehydroquinate dehydratase (149 aa).

The active-site Proton acceptor is the Y26. 3 residues coordinate substrate: N75, H81, and D88. The Proton donor role is filled by H101. Substrate contacts are provided by residues 102-103 and R112; that span reads LS.

The protein belongs to the type-II 3-dehydroquinase family. In terms of assembly, homododecamer.

It catalyses the reaction 3-dehydroquinate = 3-dehydroshikimate + H2O. The protein operates within metabolic intermediate biosynthesis; chorismate biosynthesis; chorismate from D-erythrose 4-phosphate and phosphoenolpyruvate: step 3/7. Its function is as follows. Catalyzes a trans-dehydration via an enolate intermediate. This chain is 3-dehydroquinate dehydratase, found in Shewanella woodyi (strain ATCC 51908 / MS32).